A 214-amino-acid chain; its full sequence is MTEKFPDLPDLQPETLRVSGLSLSRGDITLVRDFSLDLAPGQAMLMSGPNGTGKTTLLRAVAGFVRPDAGRVVFGEGPKADSASELVAWLGHADGLKPVETPRQSLRFWAKMNDQGRDPILPLMRAMAIESLIDRPASRLSRGQQRRCALVRVALANRPIWLLDEPAGPLDGGGRARLAALVDWHRSRGGSVIAATHQSLDWPDAKRIDLGAHR.

Residues 16 to 212 form the ABC transporter domain; that stretch reads LRVSGLSLSR…PDAKRIDLGA (197 aa). 48 to 55 serves as a coordination point for ATP; the sequence is GPNGTGKT.

The protein belongs to the ABC transporter superfamily. CcmA exporter (TC 3.A.1.107) family. As to quaternary structure, the complex is composed of two ATP-binding proteins (CcmA) and two transmembrane proteins (CcmB).

Its subcellular location is the cell inner membrane. The enzyme catalyses heme b(in) + ATP + H2O = heme b(out) + ADP + phosphate + H(+). Part of the ABC transporter complex CcmAB involved in the biogenesis of c-type cytochromes; once thought to export heme, this seems not to be the case, but its exact role is uncertain. Responsible for energy coupling to the transport system. The sequence is that of Cytochrome c biogenesis ATP-binding export protein CcmA from Maricaulis maris (strain MCS10) (Caulobacter maris).